The following is a 199-amino-acid chain: Large ribosomal subunit protein bL25 (199 aa).

Belongs to the bacterial ribosomal protein bL25 family. CTC subfamily. In terms of assembly, part of the 50S ribosomal subunit; part of the 5S rRNA/L5/L18/L25 subcomplex. Contacts the 5S rRNA. Binds to the 5S rRNA independently of L5 and L18.

Its function is as follows. This is one of the proteins that binds to the 5S RNA in the ribosome where it forms part of the central protuberance. The chain is Large ribosomal subunit protein bL25 from Pelodictyon phaeoclathratiforme (strain DSM 5477 / BU-1).